The chain runs to 709 residues: DNA topoisomerase 1 (709 aa).

Residues 3–127 (KNLVVIESPN…KCKRITFNEI (125 aa)) form the Toprim domain. 2 residues coordinate Mg(2+): glutamate 9 and aspartate 95. Positions 143–598 (DLNWVESQFA…FWTNFKSDVK (456 aa)) constitute a Topo IA-type catalytic domain. Residues 176-181 (SAGRVQ) form an interaction with DNA region. Tyrosine 334 acts as the O-(5'-phospho-DNA)-tyrosine intermediate in catalysis. 2 C4-type zinc fingers span residues 618–646 (CPKC…FPKC) and 667–696 (CPEC…FPNC).

It belongs to the type IA topoisomerase family. As to quaternary structure, monomer. Mg(2+) serves as cofactor.

The catalysed reaction is ATP-independent breakage of single-stranded DNA, followed by passage and rejoining.. Its function is as follows. Releases the supercoiling and torsional tension of DNA, which is introduced during the DNA replication and transcription, by transiently cleaving and rejoining one strand of the DNA duplex. Introduces a single-strand break via transesterification at a target site in duplex DNA. The scissile phosphodiester is attacked by the catalytic tyrosine of the enzyme, resulting in the formation of a DNA-(5'-phosphotyrosyl)-enzyme intermediate and the expulsion of a 3'-OH DNA strand. The free DNA strand then undergoes passage around the unbroken strand, thus removing DNA supercoils. Finally, in the religation step, the DNA 3'-OH attacks the covalent intermediate to expel the active-site tyrosine and restore the DNA phosphodiester backbone. The chain is DNA topoisomerase 1 from Mycoplasma genitalium (strain ATCC 33530 / DSM 19775 / NCTC 10195 / G37) (Mycoplasmoides genitalium).